Here is a 192-residue protein sequence, read N- to C-terminus: Orotate phosphoribosyltransferase (192 aa).

5-phospho-alpha-D-ribose 1-diphosphate-binding positions include R84, K88, and 110–118; that span reads DDVLTTGNS. Residues T114 and R142 each coordinate orotate.

The protein belongs to the purine/pyrimidine phosphoribosyltransferase family. PyrE subfamily. Homodimer. It depends on Mg(2+) as a cofactor.

The catalysed reaction is orotidine 5'-phosphate + diphosphate = orotate + 5-phospho-alpha-D-ribose 1-diphosphate. It functions in the pathway pyrimidine metabolism; UMP biosynthesis via de novo pathway; UMP from orotate: step 1/2. In terms of biological role, catalyzes the transfer of a ribosyl phosphate group from 5-phosphoribose 1-diphosphate to orotate, leading to the formation of orotidine monophosphate (OMP). In Pyrobaculum calidifontis (strain DSM 21063 / JCM 11548 / VA1), this protein is Orotate phosphoribosyltransferase.